The sequence spans 151 residues: MASMQKRLQKELLALQNEPPPGMTLNEKSVQNSITQWIVDMEGAPGTLYEGEKFQLLFKFSSRYPFDSPQVMFTGDNIPVHPHVYSNGHICLSILTEDWSPALSVQSVCLSIISMLSSCKEKRRPPDNSFYVRTCNKNPKKTKWWYHDDTC.

In terms of domain architecture, UBC core spans 3–151; that stretch reads SMQKRLQKEL…TKWWYHDDTC (149 aa). The active-site Glycyl thioester intermediate is the Cys91.

This sequence belongs to the ubiquitin-conjugating enzyme family.

The protein resides in the nucleus. The enzyme catalyses S-ubiquitinyl-[E1 ubiquitin-activating enzyme]-L-cysteine + [E2 ubiquitin-conjugating enzyme]-L-cysteine = [E1 ubiquitin-activating enzyme]-L-cysteine + S-ubiquitinyl-[E2 ubiquitin-conjugating enzyme]-L-cysteine.. The catalysed reaction is S-ubiquitinyl-[E1 ubiquitin-activating enzyme]-L-cysteine + [acceptor protein]-N-terminal-amino acid = [E1 ubiquitin-activating enzyme]-L-cysteine + N-terminal-ubiquitinyl-[acceptor protein].. Its pathway is protein modification; protein ubiquitination. Its function is as follows. Accepts ubiquitin from the E1 complex and catalyzes its covalent attachment to other proteins. Catalyzes monoubiquitination. Involved in degradation of misfolded chaperone substrate and DNA repair. This Xenopus tropicalis (Western clawed frog) protein is Ubiquitin-conjugating enzyme E2 W (ube2w).